Reading from the N-terminus, the 314-residue chain is Serine protease 46 (314 aa).

One can recognise a Peptidase S1 domain in the interval 44–281 (VVNGKAVEVG…FTQWIKRQIG (238 aa)). The cysteines at positions 69 and 85 are disulfide-linked. Catalysis depends on charge relay system residues His84 and Asp130. Intrachain disulfides connect Cys164-Cys239, Cys197-Cys219, and Cys229-Cys257. Ser233 serves as the catalytic Charge relay system. Residues 293–313 (FLSPFILTGYILLVSLGSLWL) form a helical membrane-spanning segment.

Belongs to the peptidase S1 family.

It is found in the membrane. The chain is Serine protease 46 (Prss46) from Mus musculus (Mouse).